A 314-amino-acid polypeptide reads, in one-letter code: Serine/threonine-protein phosphatase SIT4 (314 aa).

Mn(2+)-binding residues include Asp53, His55, Asp85, and Asn117. His118 (proton donor) is an active-site residue. His167 and His241 together coordinate Mn(2+).

The protein belongs to the PPP phosphatase family. PP-6 (PP-V) subfamily. In terms of assembly, interacts with MDS3. Requires Mn(2+) as cofactor.

The protein localises to the cytoplasm. It carries out the reaction O-phospho-L-seryl-[protein] + H2O = L-seryl-[protein] + phosphate. The enzyme catalyses O-phospho-L-threonyl-[protein] + H2O = L-threonyl-[protein] + phosphate. Its function is as follows. Serine/threonine protein phosphatase which is involved in the dephosphorylation of the large subunit of RNA polymerase II. Is required in late G1 for normal G1 cyclin expression, bud initiation and expression of certain genes that are periodically expressed during late G1. Plays a role during hyphal growth through the regulation of cell wall biogenesis, osmosensing and protein translation. Involved in virulence in a mouse systemic infection model. This is Serine/threonine-protein phosphatase SIT4 (SIT4) from Candida albicans (strain SC5314 / ATCC MYA-2876) (Yeast).